The following is a 340-amino-acid chain: tRNA N6-adenosine threonylcarbamoyltransferase (340 aa).

Fe cation contacts are provided by H111 and H115. Residues V133–G137, D166, G179, D183, and N274 each bind substrate. D299 provides a ligand contact to Fe cation.

It belongs to the KAE1 / TsaD family. Fe(2+) serves as cofactor.

Its subcellular location is the cytoplasm. It catalyses the reaction L-threonylcarbamoyladenylate + adenosine(37) in tRNA = N(6)-L-threonylcarbamoyladenosine(37) in tRNA + AMP + H(+). Functionally, required for the formation of a threonylcarbamoyl group on adenosine at position 37 (t(6)A37) in tRNAs that read codons beginning with adenine. Is involved in the transfer of the threonylcarbamoyl moiety of threonylcarbamoyl-AMP (TC-AMP) to the N6 group of A37, together with TsaE and TsaB. TsaD likely plays a direct catalytic role in this reaction. The polypeptide is tRNA N6-adenosine threonylcarbamoyltransferase (Brachyspira hyodysenteriae (strain ATCC 49526 / WA1)).